We begin with the raw amino-acid sequence, 649 residues long: Endoglucanase D (649 aa).

Residues 1 to 41 (MSRMTLKSSMKKRVLSLLIAVVFLSLTGVFPSGLIETKVSA) form the signal peptide. Aspartate 201 acts as the Nucleophile in catalysis. Catalysis depends on residues histidine 516 and aspartate 546. Glutamate 555 serves as the catalytic Proton donor. The Dockerin domain maps to 579–649 (NEVLYGDVND…LIRVIEKLPI (71 aa)).

This sequence belongs to the glycosyl hydrolase 9 (cellulase E) family. Ca(2+) is required as a cofactor.

The catalysed reaction is Endohydrolysis of (1-&gt;4)-beta-D-glucosidic linkages in cellulose, lichenin and cereal beta-D-glucans.. This enzyme catalyzes the endohydrolysis of 1,4-beta-glucosidic linkages in cellulose, lichenin and cereal beta-D-glucans. This chain is Endoglucanase D (celD), found in Acetivibrio thermocellus (strain ATCC 27405 / DSM 1237 / JCM 9322 / NBRC 103400 / NCIMB 10682 / NRRL B-4536 / VPI 7372) (Clostridium thermocellum).